We begin with the raw amino-acid sequence, 968 residues long: Glycine dehydrogenase (decarboxylating) (968 aa).

K717 carries the post-translational modification N6-(pyridoxal phosphate)lysine.

This sequence belongs to the GcvP family. In terms of assembly, the glycine cleavage system is composed of four proteins: P, T, L and H. Pyridoxal 5'-phosphate serves as cofactor.

The catalysed reaction is N(6)-[(R)-lipoyl]-L-lysyl-[glycine-cleavage complex H protein] + glycine + H(+) = N(6)-[(R)-S(8)-aminomethyldihydrolipoyl]-L-lysyl-[glycine-cleavage complex H protein] + CO2. In terms of biological role, the glycine cleavage system catalyzes the degradation of glycine. The P protein binds the alpha-amino group of glycine through its pyridoxal phosphate cofactor; CO(2) is released and the remaining methylamine moiety is then transferred to the lipoamide cofactor of the H protein. This Tropheryma whipplei (strain TW08/27) (Whipple's bacillus) protein is Glycine dehydrogenase (decarboxylating).